The chain runs to 440 residues: Tryptophan aminotransferase-related protein 2 (440 aa).

Residues 7-26 (FLSWRNMLVLSLAINFSLIL) traverse the membrane as a helical segment. Pyridoxal 5'-phosphate-binding positions include Tyr-112, 154–155 (ST), Asn-222, 242–245 (DLAY), 265–268 (TASK), and Arg-276. Position 268 is an N6-(pyridoxal phosphate)lysine (Lys-268).

Belongs to the alliinase family. It depends on pyridoxal 5'-phosphate as a cofactor. In terms of tissue distribution, expressed in roots, cotyledons and in the apical parts of hypocotyls. In roots, restricted to the provasculature of meristematic regions. Detected on the inner side of the apical hooks.

It localises to the membrane. It catalyses the reaction L-tryptophan + 2-oxoglutarate = indole-3-pyruvate + L-glutamate. It carries out the reaction L-tryptophan + pyruvate = indole-3-pyruvate + L-alanine. It functions in the pathway plant hormone metabolism; auxin biosynthesis. With respect to regulation, inhibited by L-kynurenine. In terms of biological role, involved in auxin production. Both TAA1 and TAR2 are required for maintaining proper auxin levels in roots, while TAA1, TAR1 and TAR2 are required for proper embryo patterning. Involved in the maintenance of the root stem cell niches. The sequence is that of Tryptophan aminotransferase-related protein 2 (TAR2) from Arabidopsis thaliana (Mouse-ear cress).